The chain runs to 272 residues: Imidazole glycerol phosphate synthase subunit HisF (272 aa).

Catalysis depends on residues Asp-11 and Asp-130.

It belongs to the HisA/HisF family. As to quaternary structure, heterodimer of HisH and HisF.

Its subcellular location is the cytoplasm. The catalysed reaction is 5-[(5-phospho-1-deoxy-D-ribulos-1-ylimino)methylamino]-1-(5-phospho-beta-D-ribosyl)imidazole-4-carboxamide + L-glutamine = D-erythro-1-(imidazol-4-yl)glycerol 3-phosphate + 5-amino-1-(5-phospho-beta-D-ribosyl)imidazole-4-carboxamide + L-glutamate + H(+). It functions in the pathway amino-acid biosynthesis; L-histidine biosynthesis; L-histidine from 5-phospho-alpha-D-ribose 1-diphosphate: step 5/9. In terms of biological role, IGPS catalyzes the conversion of PRFAR and glutamine to IGP, AICAR and glutamate. The HisF subunit catalyzes the cyclization activity that produces IGP and AICAR from PRFAR using the ammonia provided by the HisH subunit. This chain is Imidazole glycerol phosphate synthase subunit HisF, found in Methanococcus vannielii (strain ATCC 35089 / DSM 1224 / JCM 13029 / OCM 148 / SB).